The chain runs to 191 residues: Dephospho-CoA kinase (191 aa).

The 189-residue stretch at 3–191 (AIGITGSYAS…NLIANLECRV (189 aa)) folds into the DPCK domain. 11 to 16 (ASGKTF) contributes to the ATP binding site.

It belongs to the CoaE family.

It localises to the cytoplasm. The catalysed reaction is 3'-dephospho-CoA + ATP = ADP + CoA + H(+). It functions in the pathway cofactor biosynthesis; coenzyme A biosynthesis; CoA from (R)-pantothenate: step 5/5. Catalyzes the phosphorylation of the 3'-hydroxyl group of dephosphocoenzyme A to form coenzyme A. This Rickettsia bellii (strain RML369-C) protein is Dephospho-CoA kinase.